The sequence spans 1930 residues: Transport and Golgi organization protein 1 homolog (1930 aa).

The N-terminal stretch at 1 to 24 (MAAAPGLLFWLFVLGALWWVPGQS) is a signal peptide. Over 25 to 1171 (DLSHGRRFSD…EPAAVPPLES (1147 aa)) the chain is Lumenal. The 63-residue stretch at 45–107 (MLMYRGKALE…PKDLIKVLHK (63 aa)) folds into the SH3 domain. Disordered stretches follow at residues 144-263 (LELE…REKT), 317-496 (EEEE…AAEK), 547-737 (LGSS…MNSQ), 754-891 (TKQP…TPEI), and 1018-1149 (TAPL…PVGA). The segment covering 152–189 (EESKKAEEVSQHREKSPEESRGRELDPVPEPEAFRADS) has biased composition (basic and acidic residues). Residues 197–211 (SESTEGLQGQPSAQE) show a composition bias toward polar residues. Ser229 bears the Phosphoserine mark. Polar residues predominate over residues 247–256 (ESRTGNSSPA). Residues 317 to 330 (EEEEEVEEDADSSD) show a composition bias toward acidic residues. A compositionally biased stretch (basic and acidic residues) spans 338 to 368 (SDKDEKVPGKPMIEKYLTDKDPNLSEEDKVE). An N-linked (GlcNAc...) asparagine glycan is attached at Asn360. Residues 420–430 (DSEDEGDDLFV) are compositionally biased toward acidic residues. Basic and acidic residues-rich tracts occupy residues 431–442 (EEPKTNDVKDSE) and 451–461 (GEEKDIQESRK). N-linked (GlcNAc...) asparagine glycosylation is present at Asn631. Over residues 661 to 677 (EDGTDAEQARAIRRPQE) the composition is skewed to basic and acidic residues. Acidic residues predominate over residues 692–701 (DEEEEEEEGD). The span at 715 to 726 (VSAQQSRENSPS) shows a compositional bias: polar residues. The span at 791–800 (EESHLADMRA) shows a compositional bias: basic and acidic residues. Ser856 carries the post-translational modification Phosphoserine. Residues 1030–1039 (GWARPGEERQ) are compositionally biased toward basic and acidic residues. Polar residues-rich tracts occupy residues 1040-1054 (PPQQ…TGDL) and 1115-1127 (QPVT…SEVS). The span at 1128–1137 (QKPDTKKDID) shows a compositional bias: basic and acidic residues. Residues 1172 to 1192 (AFGSLYAFILYLSKMLLATLP) lie within the membrane without spanning it. Topologically, residues 1193 to 1202 (DNVQPGPDFY) are lumenal. The helical transmembrane segment at 1203–1223 (GLPWQPVIITAVLGIVSFAIF) threads the bilayer. Over 1224 to 1930 (SWRTILVVKS…DRSQASKPTP (707 aa)) the chain is Cytoplasmic. Coiled coils occupy residues 1236-1329 (YQVT…KNQD) and 1359-1422 (LNEA…EIAL). The interval 1238 to 1677 (VTEKQISEKL…VIVKPMPGRP (440 aa)) is mediates interaction with MIA2. A disordered region spans residues 1447-1472 (ESEDPDKGGNESDDLANGETGGDRSE). Ser1458 is modified (phosphoserine). A coiled-coil region spans residues 1514 to 1662 (NLEDQIKKLE…LLEMTQKMAM (149 aa)). 3 disordered regions span residues 1669 to 1796 (IVKP…VPLM), 1801 to 1820 (PPPI…FGPR), and 1840 to 1930 (APGV…KPTP). A compositionally biased stretch (polar residues) spans 1677 to 1694 (PNTQNPPRRGLLSQNGSF). Phosphoserine occurs at positions 1693 and 1705. A compositionally biased stretch (pro residues) spans 1706–1715 (PPLPAEPPGR). Residues 1722–1738 (SRRDTPRSEFGSLDRHL) show a composition bias toward basic and acidic residues. Phosphoserine occurs at positions 1733, 1754, 1766, and 1770. Residues 1760–1773 (PVVNSSSRSSSPAK) show a composition bias toward low complexity. Residues 1776-1930 (DEGKVNMAPK…DRSQASKPTP (155 aa)) are proline-rich domain (PRD); mediates interaction with the COPII coat subunits SEC23A and SEC23B. A compositionally biased stretch (pro residues) spans 1801–1811 (PPPIRYGPPPQ). The residue at position 1805 (Arg1805) is an Asymmetric dimethylarginine. The interval 1809–1869 (PPQLCGGPFG…GHTPFRPPGS (61 aa)) is SEC16A-interacting region (SIR); required for its localization to endoplasmic reticulum exit sites and for its interaction with SEC16A. Residues 1846–1858 (GKRDLPLDPREFL) show a composition bias toward basic and acidic residues. The segment covering 1881 to 1898 (RLPPPTHGPQEYPPPPPA) has biased composition (pro residues). Ser1915 is modified (phosphoserine). Polar residues predominate over residues 1915-1930 (SPSSVQDRSQASKPTP).

The protein belongs to the MIA/OTOR family. Tango1 subfamily. In terms of assembly, interacts with MIA2. Interacts (via SH3 domain) with COL7A1. Interacts with the COPII coat subunits SEC23A, SEC23B and maybe SEC24C. May interact with APOB and MIA2. Interacts with SEC16A.

It localises to the endoplasmic reticulum membrane. Plays a role in the transport of cargos that are too large to fit into COPII-coated vesicles and require specific mechanisms to be incorporated into membrane-bound carriers and exported from the endoplasmic reticulum. This protein is required for collagen VII (COL7A1) secretion by loading COL7A1 into transport carriers. It may participate in cargo loading of COL7A1 at endoplasmic reticulum exit sites by binding to COPII coat subunits Sec23/24 and guiding SH3-bound COL7A1 into a growing carrier. Does not play a role in global protein secretion and is apparently specific to COL7A1 cargo loading. However, it may participate in secretion of other proteins in cells that do not secrete COL7A1. It is also specifically required for the secretion of lipoproteins by participating in their export from the endoplasmic reticulum. Required for correct assembly of COPII coat components at endoplasmic reticulum exit sites (ERES) and for the localization of SEC16A and membrane-bound ER-resident complexes consisting of MIA2 and PREB/SEC12 to ERES. The sequence is that of Transport and Golgi organization protein 1 homolog from Mus musculus (Mouse).